A 386-amino-acid polypeptide reads, in one-letter code: MAGKRDYYEILGVDRGASDAEIKKAYRKLAKQYHPDMNPGDKAAEAKFKEINEAYEVLSDPQKRARYDQFGHSAFDPNGFGGGGFGGGFTGGFGDFDFGGFGDIFEAFFGSGFGTRTSSARRGPQKGADLKYSMEVSFEEAAFGTEKEVTVSRLEICPTCSGSGTKPGHQPVTCRQCNGTGQVQYKQRTPFGQIVNVRTCDVCHGEGKIITNPCETCGGKGRVRKHTKLKVRIPAGIDNGETISLRGEGEHGIKGGPSGDLFITIKVKPHPIFKRHGNDVNCEIPITFTQAALGAEIEVPTLDGKEKIVIPEGTQTGTVFKLKGKGIPFLRSSGRGDQYVKVNIEVPRKLNEKQKEVLRQFAELVGDEVHEQRKGFFNKMKDALGM.

Positions 6-71 (DYYEILGVDR…QKRARYDQFG (66 aa)) constitute a J domain. The CR-type zinc finger occupies 144–226 (GTEKEVTVSR…CGGKGRVRKH (83 aa)). Residues C157, C160, C174, C177, C200, C203, C214, and C217 each contribute to the Zn(2+) site. 4 CXXCXGXG motif repeats span residues 157-164 (CPTCSGSG), 174-181 (CRQCNGTG), 200-207 (CDVCHGEG), and 214-221 (CETCGGKG).

It belongs to the DnaJ family. In terms of assembly, homodimer. It depends on Zn(2+) as a cofactor.

It localises to the cytoplasm. In terms of biological role, participates actively in the response to hyperosmotic and heat shock by preventing the aggregation of stress-denatured proteins and by disaggregating proteins, also in an autonomous, DnaK-independent fashion. Unfolded proteins bind initially to DnaJ; upon interaction with the DnaJ-bound protein, DnaK hydrolyzes its bound ATP, resulting in the formation of a stable complex. GrpE releases ADP from DnaK; ATP binding to DnaK triggers the release of the substrate protein, thus completing the reaction cycle. Several rounds of ATP-dependent interactions between DnaJ, DnaK and GrpE are required for fully efficient folding. Also involved, together with DnaK and GrpE, in the DNA replication of plasmids through activation of initiation proteins. This Acetivibrio thermocellus (strain ATCC 27405 / DSM 1237 / JCM 9322 / NBRC 103400 / NCIMB 10682 / NRRL B-4536 / VPI 7372) (Clostridium thermocellum) protein is Chaperone protein DnaJ.